A 238-amino-acid chain; its full sequence is 1-(5-phosphoribosyl)-5-[(5-phosphoribosylamino)methylideneamino] imidazole-4-carboxamide isomerase (238 aa).

D8 acts as the Proton acceptor in catalysis. D129 functions as the Proton donor in the catalytic mechanism.

It belongs to the HisA/HisF family.

The protein resides in the cytoplasm. It carries out the reaction 1-(5-phospho-beta-D-ribosyl)-5-[(5-phospho-beta-D-ribosylamino)methylideneamino]imidazole-4-carboxamide = 5-[(5-phospho-1-deoxy-D-ribulos-1-ylimino)methylamino]-1-(5-phospho-beta-D-ribosyl)imidazole-4-carboxamide. The protein operates within amino-acid biosynthesis; L-histidine biosynthesis; L-histidine from 5-phospho-alpha-D-ribose 1-diphosphate: step 4/9. This Clostridium novyi (strain NT) protein is 1-(5-phosphoribosyl)-5-[(5-phosphoribosylamino)methylideneamino] imidazole-4-carboxamide isomerase.